Reading from the N-terminus, the 357-residue chain is DNA replication and repair protein RecF (357 aa).

ATP is bound at residue 30 to 37; it reads GANGSGKT.

It belongs to the RecF family.

It is found in the cytoplasm. Functionally, the RecF protein is involved in DNA metabolism; it is required for DNA replication and normal SOS inducibility. RecF binds preferentially to single-stranded, linear DNA. It also seems to bind ATP. This Shigella boydii serotype 4 (strain Sb227) protein is DNA replication and repair protein RecF.